Consider the following 211-residue polypeptide: Probable GTP-binding protein EngB (211 aa).

The EngB-type G domain occupies 13–188 (SGYEIAFAGR…ASVMAGRLHF (176 aa)). GTP is bound by residues 21 to 28 (GRSNAGKS), 48 to 52 (GRTQM), 67 to 70 (DLPG), 134 to 137 (TKAD), and 167 to 169 (FSS). Residues S28 and T50 each coordinate Mg(2+).

It belongs to the TRAFAC class TrmE-Era-EngA-EngB-Septin-like GTPase superfamily. EngB GTPase family. Mg(2+) serves as cofactor.

Its function is as follows. Necessary for normal cell division and for the maintenance of normal septation. The protein is Probable GTP-binding protein EngB of Acinetobacter baumannii (strain ATCC 17978 / DSM 105126 / CIP 53.77 / LMG 1025 / NCDC KC755 / 5377).